The primary structure comprises 332 residues: L-lactate dehydrogenase A chain (332 aa).

Residues 29 to 57 (GMVGMASAISILLKDLCDELALVDVMEDK) and Arg-99 contribute to the NAD(+) site. Substrate is bound by residues Arg-106, Asn-138, and Arg-169. Residue Asn-138 coordinates NAD(+). Catalysis depends on His-193, which acts as the Proton acceptor. Residue Thr-248 participates in substrate binding.

This sequence belongs to the LDH/MDH superfamily. LDH family. As to quaternary structure, homotetramer.

It localises to the cytoplasm. The enzyme catalyses (S)-lactate + NAD(+) = pyruvate + NADH + H(+). It functions in the pathway fermentation; pyruvate fermentation to lactate; (S)-lactate from pyruvate: step 1/1. In terms of biological role, interconverts simultaneously and stereospecifically pyruvate and lactate with concomitant interconversion of NADH and NAD(+). The protein is L-lactate dehydrogenase A chain (ldha) of Rhinogobiops nicholsii (Blackeye goby).